Reading from the N-terminus, the 201-residue chain is 3-isopropylmalate dehydratase small subunit (201 aa).

It belongs to the LeuD family. LeuD type 1 subfamily. As to quaternary structure, heterodimer of LeuC and LeuD.

The catalysed reaction is (2R,3S)-3-isopropylmalate = (2S)-2-isopropylmalate. It functions in the pathway amino-acid biosynthesis; L-leucine biosynthesis; L-leucine from 3-methyl-2-oxobutanoate: step 2/4. Its function is as follows. Catalyzes the isomerization between 2-isopropylmalate and 3-isopropylmalate, via the formation of 2-isopropylmaleate. This chain is 3-isopropylmalate dehydratase small subunit, found in Escherichia coli O9:H4 (strain HS).